A 247-amino-acid polypeptide reads, in one-letter code: Bidirectional sugar transporter SWEET1 (247 aa).

Residues 1–6 (MNIAHT) lie on the Extracellular side of the membrane. A helical membrane pass occupies residues 7–27 (IFGVFGNATALFLFLAPSITF). One can recognise a MtN3/slv 1 domain in the interval 7–94 (IFGVFGNATA…LIFLFYAPKK (88 aa)). At 28–41 (KRIIKNKSTEQFSG) the chain is on the cytoplasmic side. A helical transmembrane segment spans residues 42 to 62 (IPYPMTLLNCLLSAWYGLPFV). Over 63-71 (SKDNTLVST) the chain is Extracellular. The chain crosses the membrane as a helical span at residues 72-92 (INGTGAVIETVYVLIFLFYAP). Over 93–98 (KKEKIK) the chain is Cytoplasmic. Residues 99-119 (IFGIFSCVLAVFATVALVSLF) form a helical membrane-spanning segment. Residues 120-127 (ALQGNGRK) are Extracellular-facing. Residues 128–148 (LFCGLAATVFSIIMYASPLSI) form a helical membrane-spanning segment. Positions 130-213 (CGLAATVFSI…ILYFIYCGNK (84 aa)) constitute a MtN3/slv 2 domain. The Cytoplasmic portion of the chain corresponds to 149–162 (MRLVVKTKSVEFMP). A helical membrane pass occupies residues 163–183 (FFLSLFVFLCGTSWFVYGLIG). Over 184–187 (RDPF) the chain is Extracellular. A helical transmembrane segment spans residues 188–208 (VAIPNGFGCALGTLQLILYFI). The Cytoplasmic segment spans residues 209 to 247 (YCGNKGEKSADAQKDEKSVEMKDDEKKQNVVNGKQDLQV). Residues 221-236 (QKDEKSVEMKDDEKKQ) show a composition bias toward basic and acidic residues. Positions 221–247 (QKDEKSVEMKDDEKKQNVVNGKQDLQV) are disordered. Positions 237–247 (NVVNGKQDLQV) are enriched in polar residues.

Belongs to the SWEET sugar transporter family. Forms homooligomers and heterooligomers with SWEET9, SWEET11, SWEET13, SWEET15, SWEET16 and SWEET17. As to expression, mainly expressed in flowers.

Its subcellular location is the cell membrane. It localises to the endoplasmic reticulum membrane. In terms of biological role, mediates both low-affinity uptake and efflux of sugar across the plasma membrane. Can transport glucose, and, to a lower extent, mannose, fructose and galactose. The polypeptide is Bidirectional sugar transporter SWEET1 (Arabidopsis thaliana (Mouse-ear cress)).